Here is a 413-residue protein sequence, read N- to C-terminus: MNTKINSKIRESLNKELKRQQSHIELIASENYVSQAVLELNGSVLTNKYAEGYPGKRYYGGCEFIDEIESLGIQTAKELFHAEHANIQPHSGSQANDAAYKALLEPKDRVVAMGLDAGGHLTHGYPINFSGYTYDFRFYGVNKDTEQLDYQEIEQIVLEHKPKLIVAGASAYSRIIDFKKFKEIADKVGAYLMVDMAHIAGLVAAGVHPNPMEYADIVTTTTHKTLRGARGGLILCKQEFAKKVDSAVFPGSQGGPLENLIAGKTQALLEASTDEFKEYGKQIVKNTKALANVLQENGLRLVAGGSDNHLINVDIKSTLQITGKKAEKILESIGIICNKNMIPFDTEKPFYTSGIRLGTPAMTTRGFKEEEFKQVGLIIVSALKDQSEENLEKLAKQVVSLCEKFPIYQSIKY.

Residues Leu-115 and 119–121 (GHL) each bind (6S)-5,6,7,8-tetrahydrofolate. Lys-224 is modified (N6-(pyridoxal phosphate)lysine).

It belongs to the SHMT family. As to quaternary structure, homodimer. Pyridoxal 5'-phosphate is required as a cofactor.

It is found in the cytoplasm. The enzyme catalyses (6R)-5,10-methylene-5,6,7,8-tetrahydrofolate + glycine + H2O = (6S)-5,6,7,8-tetrahydrofolate + L-serine. It functions in the pathway one-carbon metabolism; tetrahydrofolate interconversion. The protein operates within amino-acid biosynthesis; glycine biosynthesis; glycine from L-serine: step 1/1. Functionally, catalyzes the reversible interconversion of serine and glycine with tetrahydrofolate (THF) serving as the one-carbon carrier. This reaction serves as the major source of one-carbon groups required for the biosynthesis of purines, thymidylate, methionine, and other important biomolecules. Also exhibits THF-independent aldolase activity toward beta-hydroxyamino acids, producing glycine and aldehydes, via a retro-aldol mechanism. The polypeptide is Serine hydroxymethyltransferase (Mycoplasma capricolum subsp. capricolum (strain California kid / ATCC 27343 / NCTC 10154)).